The chain runs to 255 residues: MTTIDLNCDLGEGFGAWQMGNDAAMIELASSVNIACGFHAGDADIMRNTVALAKAGGVSIGAHPGYRDLHGFGRRPVAGLSAAEIENLVAYQIGALQAVASLAGHKVTHVKAHGALSNVACEDDMTANAIAAAIKAVDRNLIFVVLANSRLLKAGEAAGLPLAHEVFADRAYEDDATLVSRKKPGAVLHDPAQIAARVVRMVQDGAVVSVTGKAIKMRTDTVCIHGDTPGAVEIARGVRQALKAAGIAVAPFAGG.

The protein belongs to the LamB/PxpA family. In terms of assembly, forms a complex composed of PxpA, PxpB and PxpC.

It carries out the reaction 5-oxo-L-proline + ATP + 2 H2O = L-glutamate + ADP + phosphate + H(+). In terms of biological role, catalyzes the cleavage of 5-oxoproline to form L-glutamate coupled to the hydrolysis of ATP to ADP and inorganic phosphate. The sequence is that of 5-oxoprolinase subunit A from Rhodopseudomonas palustris (strain BisB18).